Reading from the N-terminus, the 180-residue chain is Small ribosomal subunit protein uS4 (180 aa).

An S4 RNA-binding domain is found at 103 to 174; it reads RRLQTLVFKK…HPERMVIEEV (72 aa).

The protein belongs to the universal ribosomal protein uS4 family. As to quaternary structure, part of the 30S ribosomal subunit. Contacts protein S5. The interaction surface between S4 and S5 is involved in control of translational fidelity.

One of the primary rRNA binding proteins, it binds directly to 16S rRNA where it nucleates assembly of the body of the 30S subunit. Its function is as follows. With S5 and S12 plays an important role in translational accuracy. This Thermococcus sibiricus (strain DSM 12597 / MM 739) protein is Small ribosomal subunit protein uS4.